The sequence spans 159 residues: Ecotin (159 aa).

Positions 1–22 are cleaved as a signal peptide; the sequence is MRPTPMTAILALTLAAAAPAMA. Cysteine 68 and cysteine 105 form a disulfide bridge.

Belongs to the protease inhibitor I11 (ecotin) family. As to quaternary structure, homodimer.

The protein resides in the periplasm. Functionally, general inhibitor of family S1 serine proteases. The protein is Ecotin of Pseudomonas putida (strain GB-1).